Consider the following 328-residue polypeptide: Malate dehydrogenase 1 (328 aa).

12 to 18 provides a ligand contact to NAD(+); it reads GAAGQIA. Residues R93 and R99 each contribute to the substrate site. NAD(+) is bound by residues N106, Q113, and 130-132; that span reads VGN. Residues N132 and R163 each contribute to the substrate site. H188 serves as the catalytic Proton acceptor.

It belongs to the LDH/MDH superfamily. MDH type 2 family.

It carries out the reaction (S)-malate + NAD(+) = oxaloacetate + NADH + H(+). Its function is as follows. Catalyzes the reversible oxidation of malate to oxaloacetate. This is Malate dehydrogenase 1 from Burkholderia vietnamiensis (strain G4 / LMG 22486) (Burkholderia cepacia (strain R1808)).